A 396-amino-acid chain; its full sequence is Ribosomal RNA large subunit methyltransferase I (396 aa).

The PUA domain maps to T2–R81.

Belongs to the methyltransferase superfamily. RlmI family.

It localises to the cytoplasm. It carries out the reaction cytidine(1962) in 23S rRNA + S-adenosyl-L-methionine = 5-methylcytidine(1962) in 23S rRNA + S-adenosyl-L-homocysteine + H(+). Functionally, specifically methylates the cytosine at position 1962 (m5C1962) of 23S rRNA. This is Ribosomal RNA large subunit methyltransferase I from Aliivibrio fischeri (strain MJ11) (Vibrio fischeri).